Here is a 256-residue protein sequence, read N- to C-terminus: MGRGRVQLKRIENKINRQVTFSKRRAGLFKKAHEISVLCDAEVALVVFSHKGKLFEYSTDSCMEKILERYERYSYAERQLIAPESDVNTNWSMEYNRLKAKIELLERNQRHYLGEDLQAMSPKELQNLEQQLDTALKHIRSRKNQLMYDSVNELQRKEKAIQEQNSMLSKQIKEREKVLMAQQEQWDQQNHGQNMPSPPPPQQHQIQHPYMLSHQPSPFLNMGGLYQEEDPMAMRRNDLDLSLEPVYNCNLGCFAA.

Residues 1 to 61 (MGRGRVQLKR…GKLFEYSTDS (61 aa)) form the MADS-box domain. The 91-residue stretch at 88 to 178 (NTNWSMEYNR…SKQIKEREKV (91 aa)) folds into the K-box domain.

In terms of assembly, homodimer capable of binding to CArG-box sequences. As to expression, expressed in some of the meristems of arrest-stage broccoli heads.

It localises to the nucleus. In terms of biological role, transcription factor that promotes early floral meristem identity in synergy with LEAFY. Displays a redundant function with CAULIFLOWER in the up-regulation of LEAFY. Required subsequently for the transition of an inflorescence meristem into a floral meristem, and for the normal development of sepals and petals in flowers. Regulates positively B class homeotic proteins. This is Floral homeotic protein APETALA 1-1 (1AP1) from Brassica oleracea var. italica (Broccoli).